Consider the following 408-residue polypeptide: Biphenyl dioxygenase system ferredoxin--NAD(+) reductase component (408 aa).

4–35 (TIAIIGAGLAGSTAARALRAQGYEGRIHLLGD) serves as a coordination point for FAD. 145 to 173 (SLVIVGGGLIGCEVATTARKLSVHVTILE) serves as a coordination point for NAD(+).

Belongs to the bacterial ring-hydroxylating dioxygenase ferredoxin reductase family. This dioxygenase system consists of four proteins: the two subunits of the hydroxylase component (BphA and BphE), a ferredoxin (BphF) and a ferredoxin reductase (BphG). It depends on FAD as a cofactor.

The enzyme catalyses 2 reduced [2Fe-2S]-[ferredoxin] + NAD(+) + H(+) = 2 oxidized [2Fe-2S]-[ferredoxin] + NADH. It functions in the pathway xenobiotic degradation; biphenyl degradation. Its function is as follows. Part of the electron transfer component of biphenyl dioxygenase, transfers electrons from ferredoxin (BphF) to NADH. This is Biphenyl dioxygenase system ferredoxin--NAD(+) reductase component (bphG) from Paraburkholderia xenovorans (strain LB400).